Here is a 157-residue protein sequence, read N- to C-terminus: uncharacterized protein (157 aa).

This is an uncharacterized protein from Aquifex aeolicus (strain VF5).